The following is a 549-amino-acid chain: Glucose-6-phosphate isomerase (549 aa).

Glu-353 functions as the Proton donor in the catalytic mechanism. Active-site residues include His-384 and Lys-513.

It belongs to the GPI family.

The protein resides in the cytoplasm. The catalysed reaction is alpha-D-glucose 6-phosphate = beta-D-fructose 6-phosphate. It participates in carbohydrate biosynthesis; gluconeogenesis. It functions in the pathway carbohydrate degradation; glycolysis; D-glyceraldehyde 3-phosphate and glycerone phosphate from D-glucose: step 2/4. Functionally, catalyzes the reversible isomerization of glucose-6-phosphate to fructose-6-phosphate. The chain is Glucose-6-phosphate isomerase from Brucella suis (strain ATCC 23445 / NCTC 10510).